The following is a 130-amino-acid chain: Anti-adapter protein IraD (130 aa).

It belongs to the GpW/Gp25 family. IraD subfamily. In terms of assembly, interacts with RssB.

Its subcellular location is the cytoplasm. In terms of biological role, inhibits RpoS proteolysis by regulating RssB activity, thereby increasing the stability of the sigma stress factor RpoS during oxidative stress. Its effect on RpoS stability is due to its interaction with RssB, which probably blocks the interaction of RssB with RpoS, and the consequent delivery of the RssB-RpoS complex to the ClpXP protein degradation pathway. The polypeptide is Anti-adapter protein IraD (Escherichia coli O7:K1 (strain IAI39 / ExPEC)).